Reading from the N-terminus, the 142-residue chain is Large ribosomal subunit protein uL23 (142 aa).

A Glycyl lysine isopeptide (Lys-Gly) (interchain with G-Cter in SUMO) cross-link involves residue lysine 61.

It belongs to the universal ribosomal protein uL23 family. In terms of assembly, component of the large ribosomal subunit (LSU). Mature yeast ribosomes consist of a small (40S) and a large (60S) subunit. The 40S small subunit contains 1 molecule of ribosomal RNA (18S rRNA) and 33 different proteins (encoded by 57 genes). The large 60S subunit contains 3 rRNA molecules (25S, 5.8S and 5S rRNA) and 46 different proteins (encoded by 81 genes). uL23 is associated with the polypeptide exit tunnel.

It is found in the cytoplasm. Functionally, component of the ribosome, a large ribonucleoprotein complex responsible for the synthesis of proteins in the cell. The small ribosomal subunit (SSU) binds messenger RNAs (mRNAs) and translates the encoded message by selecting cognate aminoacyl-transfer RNA (tRNA) molecules. The large subunit (LSU) contains the ribosomal catalytic site termed the peptidyl transferase center (PTC), which catalyzes the formation of peptide bonds, thereby polymerizing the amino acids delivered by tRNAs into a polypeptide chain. The nascent polypeptides leave the ribosome through a tunnel in the LSU and interact with protein factors that function in enzymatic processing, targeting, and the membrane insertion of nascent chains at the exit of the ribosomal tunnel. uL23 is a major component of the universal docking site for these factors at the polypeptide exit tunnel. This Saccharomyces cerevisiae (strain ATCC 204508 / S288c) (Baker's yeast) protein is Large ribosomal subunit protein uL23.